A 313-amino-acid polypeptide reads, in one-letter code: Olfactory receptor 56A5 (313 aa).

The Extracellular segment spans residues 1 to 33 (MTLPSNNSTSPVFEFFLICFPSFQSWQHWLSLP). N-linked (GlcNAc...) asparagine glycosylation is found at asparagine 6 and asparagine 7. Residues 34 to 54 (LSLLFLLAMGANATLLITIYL) form a helical membrane-spanning segment. Residues 55-67 (EASLHQPLYYLLS) lie on the Cytoplasmic side of the membrane. The chain crosses the membrane as a helical span at residues 68–88 (LLSLLDIVLCLTVIPKVLAIF). Residues 89–100 (WFDLRSISFPAC) are Extracellular-facing. A disulfide bridge links cysteine 100 with cysteine 182. Residues 101-121 (FLQVFIMNSFLTMESCTFMIM) form a helical membrane-spanning segment. Residues 122 to 146 (AYDRYVAICKPLQYSSIITDQFVAR) lie on the Cytoplasmic side of the membrane. A helical membrane pass occupies residues 147-167 (AAIFVVARNGLLTMPIPILSS). Topologically, residues 168–203 (RLRYCAGHIIKNCICTNVSVSKLSCDDITLNQSYQF) are extracellular. N-linked (GlcNAc...) asparagine glycosylation is found at asparagine 184 and asparagine 198. A helical membrane pass occupies residues 204 to 224 (VIGWTLLGSDLILIVLSYFFI). The Cytoplasmic segment spans residues 225–246 (LKTVLRIKGEGDMAKALGTCGS). Residues 247-267 (HFILILFFTTVLLVLVITNLA) traverse the membrane as a helical segment. Over 268–276 (RKRIPPDVP) the chain is Extracellular. The helical transmembrane segment at 277–297 (ILLNILHHLIPPALNPIVYGV) threads the bilayer. Over 298-313 (RTKEIKQGIQNLLRRL) the chain is Cytoplasmic.

Belongs to the G-protein coupled receptor 1 family.

Its subcellular location is the cell membrane. Odorant receptor. The protein is Olfactory receptor 56A5 (OR56A5) of Homo sapiens (Human).